A 523-amino-acid chain; its full sequence is Acetyl-coenzyme A carboxylase carboxyl transferase subunit beta, chloroplastic (523 aa).

The 300-residue stretch at 224-523 (FWVICENCHK…FVPSNQNSIK (300 aa)) folds into the CoA carboxyltransferase N-terminal domain. Zn(2+)-binding residues include Cys-228, Cys-231, Cys-247, and Cys-250. The segment at 228–250 (CENCHKFNYKRLFKSKMNICEEC) adopts a C4-type zinc-finger fold.

The protein belongs to the AccD/PCCB family. Acetyl-CoA carboxylase is a heterohexamer composed of biotin carboxyl carrier protein, biotin carboxylase and 2 subunits each of ACCase subunit alpha and ACCase plastid-coded subunit beta (accD). It depends on Zn(2+) as a cofactor.

The protein localises to the plastid. Its subcellular location is the chloroplast stroma. It catalyses the reaction N(6)-carboxybiotinyl-L-lysyl-[protein] + acetyl-CoA = N(6)-biotinyl-L-lysyl-[protein] + malonyl-CoA. The protein operates within lipid metabolism; malonyl-CoA biosynthesis; malonyl-CoA from acetyl-CoA: step 1/1. In terms of biological role, component of the acetyl coenzyme A carboxylase (ACC) complex. Biotin carboxylase (BC) catalyzes the carboxylation of biotin on its carrier protein (BCCP) and then the CO(2) group is transferred by the transcarboxylase to acetyl-CoA to form malonyl-CoA. In Cucumis sativus (Cucumber), this protein is Acetyl-coenzyme A carboxylase carboxyl transferase subunit beta, chloroplastic.